The following is a 162-amino-acid chain: Transcription elongation factor GreA (162 aa).

The stretch at 46-77 (RENAEYKAAREEQTRLNNMVTRLQEEIERAQV) forms a coiled coil.

This sequence belongs to the GreA/GreB family.

In terms of biological role, necessary for efficient RNA polymerase transcription elongation past template-encoded arresting sites. The arresting sites in DNA have the property of trapping a certain fraction of elongating RNA polymerases that pass through, resulting in locked ternary complexes. Cleavage of the nascent transcript by cleavage factors such as GreA or GreB allows the resumption of elongation from the new 3'terminus. GreA releases sequences of 2 to 3 nucleotides. The sequence is that of Transcription elongation factor GreA from Treponema pallidum (strain Nichols).